The following is a 586-amino-acid chain: Arginine--tRNA ligase (586 aa).

The 'HIGH' region signature appears at 133–143; the sequence is ANPTGPLNIVS.

Belongs to the class-I aminoacyl-tRNA synthetase family. As to quaternary structure, monomer.

It is found in the cytoplasm. The enzyme catalyses tRNA(Arg) + L-arginine + ATP = L-arginyl-tRNA(Arg) + AMP + diphosphate. The polypeptide is Arginine--tRNA ligase (Leptospira interrogans serogroup Icterohaemorrhagiae serovar copenhageni (strain Fiocruz L1-130)).